Reading from the N-terminus, the 588-residue chain is Zeta-carotene desaturase, chloroplastic/chromoplastic (588 aa).

The transit peptide at 1-49 directs the protein to the chloroplast and chromoplast; that stretch reads MATCSAYLCCPATSASLKKRVFPDGSAGFLFFGGRRLSNRLVTPKSVIR.

Belongs to the zeta carotene desaturase family. Monomer and dimer. The cofactor is decylplastoquinone. 6-decylubiquinone is required as a cofactor.

The protein localises to the plastid. It is found in the chloroplast. The protein resides in the chromoplast. The catalysed reaction is 9,9'-di-cis-zeta-carotene + 2 a quinone = 7,7',9,9'-tetra-cis-lycopene + 2 a quinol. The protein operates within carotenoid biosynthesis; lycopene biosynthesis. Catalyzes the conversion of zeta-carotene to lycopene via the intermediary of neurosporene. It carries out two consecutive desaturations (introduction of double bonds) at positions C-7 and C-7'. Shows stereoselectivity toward trans C15-C15'zeta-carotene double bond. The zeta-carotene produced by the phytoene desaturase PDS has a C15-C15' double bond in the cis configuration and it requires isomerization before being recognized as substrate by ZDS. No activity with all-trans-zeta-carotene. The main product is 7,9,7',9'-tetra-cis-lycopene (pro-lycopene). In Capsicum annuum (Capsicum pepper), this protein is Zeta-carotene desaturase, chloroplastic/chromoplastic (ZDS).